The chain runs to 407 residues: Putative polysaccharide ligase RF_0568 (407 aa).

10 consecutive transmembrane segments (helical) span residues 15–35 (LGMV…LMLF), 71–91 (MTIK…LFAI), 100–120 (FIQV…VPFG), 129–149 (LILG…SHGF), 166–186 (GCAL…SSGK), 203–223 (ISDS…FILA), 229–249 (IFFK…PVIA), 272–292 (LFIW…GYGF), 324–344 (ILQI…CLVY), and 379–399 (IWQI…KLLV).

The protein belongs to the O-antigen ligase family.

The protein localises to the membrane. This chain is Putative polysaccharide ligase RF_0568, found in Rickettsia felis (strain ATCC VR-1525 / URRWXCal2) (Rickettsia azadi).